A 317-amino-acid polypeptide reads, in one-letter code: RHOMBOID-like protein 2 (317 aa).

7 helical membrane passes run serine 33–valine 53, tryptophan 118–isoleucine 138, valine 149–glutamine 169, isoleucine 172–leucine 192, alanine 202–proline 222, valine 224–leucine 244, and leucine 272–phenylalanine 292. Serine 177 functions as the Nucleophile in the catalytic mechanism. Histidine 229 (charge relay system) is an active-site residue.

This sequence belongs to the peptidase S54 family. As to expression, expressed in roots, seedlings, leaves, stems and flowers.

It localises to the golgi apparatus membrane. It catalyses the reaction Cleaves type-1 transmembrane domains using a catalytic dyad composed of serine and histidine that are contributed by different transmembrane domains.. Functionally, rhomboid-type serine protease that catalyzes intramembrane proteolysis. Can cleave the Drosophila proteins Spitz and Keren. May function in pollen elongation. This Arabidopsis thaliana (Mouse-ear cress) protein is RHOMBOID-like protein 2.